Consider the following 467-residue polypeptide: UDP-glycosyltransferase 71D2 (467 aa).

UDP-alpha-D-glucose-binding positions include Ser283, 339–341 (SPQ), 356–364 (HCGWNSIVE), and 378–381 (YAEQ).

The protein belongs to the UDP-glycosyltransferase family.

This is UDP-glycosyltransferase 71D2 (UGT71D2) from Arabidopsis thaliana (Mouse-ear cress).